Consider the following 220-residue polypeptide: RNA polymerase sigma GP28 factor (220 aa).

Its function is as follows. Sigma factors are initiation factors that promote the attachment of RNA polymerase to specific initiation sites and are then released. This sigma factor is responsible for the expression of the phage middle genes. This is RNA polymerase sigma GP28 factor (28) from Bacillus subtilis (Bacteriophage SP01).